The primary structure comprises 91 residues: Ice-structuring protein 2A7 (91 aa).

Residues 1 to 21 (MALSLFTVGQLIFLFWTMRIT) form the signal peptide. Residues 22–39 (EANPDPAAKAVPAAAAPD) constitute a propeptide, removed by a dipeptidylpeptidase.

The protein belongs to the type-I AFP family. In terms of tissue distribution, detected in blood serum (at protein level).

The protein localises to the secreted. In terms of biological role, contributes to protect fish blood from freezing at subzero sea water temperatures. Lowers the blood freezing point. Binds to nascent ice crystals and prevents further growth. This chain is Ice-structuring protein 2A7, found in Pseudopleuronectes americanus (Winter flounder).